Here is a 600-residue protein sequence, read N- to C-terminus: Aspartate--tRNA(Asp/Asn) ligase (600 aa).

An L-aspartate-binding site is contributed by glutamate 174. The tract at residues 198-201 is aspartate; sequence QLFK. Arginine 220 is a binding site for L-aspartate. ATP contacts are provided by residues 220 to 222 and glutamine 229; that span reads RDE. An L-aspartate-binding site is contributed by histidine 457. Glutamate 491 lines the ATP pocket. Position 498 (arginine 498) interacts with L-aspartate. 543-546 contributes to the ATP binding site; that stretch reads GLDR.

This sequence belongs to the class-II aminoacyl-tRNA synthetase family. Type 1 subfamily. In terms of assembly, homodimer.

The protein localises to the cytoplasm. The catalysed reaction is tRNA(Asx) + L-aspartate + ATP = L-aspartyl-tRNA(Asx) + AMP + diphosphate. Functionally, aspartyl-tRNA synthetase with relaxed tRNA specificity since it is able to aspartylate not only its cognate tRNA(Asp) but also tRNA(Asn). Reaction proceeds in two steps: L-aspartate is first activated by ATP to form Asp-AMP and then transferred to the acceptor end of tRNA(Asp/Asn). The chain is Aspartate--tRNA(Asp/Asn) ligase from Burkholderia multivorans (strain ATCC 17616 / 249).